The following is a 1363-amino-acid chain: MFLILLISLPTAFAVIGDLKCTTVSINDVDTGVPSISTDTVDVTNGLGTYYVLDRVYLNTTLLLNGYYPTSGSTYRNMALKGTLLLSTLWFKPPFLSDFTNGIFAKVKNTKVIKDGVMYSEFPAITIGSTFVNTSYSVVVQPHTTILGNKLQGFLEISVCQYTMCEYPNTICNPNLGNQRVELWHWDTGVVSCLYKRNFTYDVNADYLYFHFYQEGGTFYAYFTDTGVVTKFLFNVYLGTVLSHYYVMPLTCNSALTLEYWVTPLTSKQYLLAFNQDGVIFNAVDCKSDFMSEIKCKTLSIAPSTGVYELNGYTVQPIADVYRRIPNLPDCNIEAWLNDKSVPSPLNWERKTFSNCNFNMSSLMSFIQAYSFTCNNIDAAKIYGMCFSSITIDKFAIPNGRKVDLQLGNLGYLQSFNYRIDTTATSCQLYYNLPAANVSVSRFNPSTWNRRFGFTEQSVFKPQPAGVFTDHDVVYAQHCFKASTNFCPCKLDGSLCVGNGPGIDAGYKTSGIGTCPAGTNYLTCHNAAQCDCLCTPDPITSKATGPYKCPQTKYLVGIGEHCSGLAIKSDHCGGNPCTCQPQAFLGWSVDSCLQGDRCNIFANFILHDVNSGTTCSTDLQKSNTDIILGVCVNYDLYGITGQGIFVEVNATYYNSWQNLLYDSNGNLYGFRDYLTNRTFMIRSCYSGRVSAAFHANSSEPALLFRNIKCNYVFNNTLSRQLQPINYFDSYLGCVVNADNSTSSVVQTCDLTVGSGYCVDYSTKRRSRRSITTGYRFTNFEPFTVNSVNDSLEPVGGLYEIQIPSEFTIGNMEEFIQTSSPKVTIDCSAFVCGDYAACKSQLVEYGSFCDNINAILTEVNELLDTTQLQVANSLMNGVTLSTKLKDGVNFNVDDINFSPVLGCLGSDCNKVSSRSAIEDLLFSKVKLSDVGFVEAYNNCTGGAEIRDLICVQSYNGIKVLPPLLSENQISGYTLAATSASLFPPWSAAAGVPFYLNVQYRINGIGVTMDVLSQNQKLIANAFNNALGAIQEGFDATNSALVKIQAVVNANAEALNNLLQQLSNRFGAISSSLQEILSRLDALEAQAQIDRLINGRLTALNAYVSQQLSDSTLVKFSAAQAMEKVNECVKSQSSRINFCGNGNHIISLVQNAPYGLYFIHFSYVPTKYVTAKVSPGLCIAGDRGIAPKSGYFVNVNNTWMFTGSGYYYPEPITGNNVVVMSTCAVNYTKAPDVMLNISTPNLPYFKEELDQWFKNQTSVAPDLSLDYINVTFLDLQDEMNRLQEAIKVLNQSYINLKDIGTYEYYVKWPWYVWLLIGFAGVAMLVLLFFICCCTGCGTSCFKKCGGCCDDYTGHQELVIKTSHED.

The first 13 residues, 1-13 (MFLILLISLPTAF), serve as a signal peptide directing secretion. Residues 14–1307 (AVIGDLKCTT…GTYEYYVKWP (1294 aa)) lie on the Extracellular side of the membrane. The region spanning 15–298 (VIGDLKCTTV…DFMSEIKCKT (284 aa)) is the BetaCoV S1-NTD domain. 5 disulfides stabilise this stretch: cysteine 21–cysteine 165, cysteine 160–cysteine 193, cysteine 172–cysteine 252, cysteine 286–cysteine 296, and cysteine 331–cysteine 356. 2 N-linked (GlcNAc...) asparagine; by host glycosylation sites follow: asparagine 59 and asparagine 133. Asparagine 198 carries N-linked (GlcNAc...) asparagine; by host glycosylation. The BetaCoV S1-CTD domain occupies 329-617 (PDCNIEAWLN…DVNSGTTCST (289 aa)). A glycan (N-linked (GlcNAc...) asparagine; by host) is linked at asparagine 359. 2 cysteine pairs are disulfide-bonded: cysteine 374–cysteine 427 and cysteine 386–cysteine 615. N-linked (GlcNAc...) asparagine; by host glycans are attached at residues asparagine 437, asparagine 649, asparagine 676, asparagine 696, asparagine 714, asparagine 739, and asparagine 788. 2 fusion peptide regions span residues 914–935 (SAIE…VEAY) and 933–953 (EAYN…VQSY). N-linked (GlcNAc...) asparagine; by host glycosylation occurs at asparagine 937. A disulfide bridge links cysteine 938 with cysteine 949. The segment at 1014–1064 (QKLIANAFNNALGAIQEGFDATNSALVKIQAVVNANAEALNNLLQQLSNRF) is heptad repeat 1. A coiled-coil region spans residues 1043–1087 (QAVVNANAEALNNLLQQLSNRFGAISSSLQEILSRLDALEAQAQI). Asparagine 1194, asparagine 1224, asparagine 1234, asparagine 1253, asparagine 1267, and asparagine 1288 each carry an N-linked (GlcNAc...) asparagine; by host glycan. Residues 1258-1296 (APDLSLDYINVTFLDLQDEMNRLQEAIKVLNQSYINLKD) form a heptad repeat 2 region. Residues 1269–1297 (TFLDLQDEMNRLQEAIKVLNQSYINLKDI) are a coiled coil. Residues 1308–1328 (WYVWLLIGFAGVAMLVLLFFI) traverse the membrane as a helical segment. The Cytoplasmic portion of the chain corresponds to 1329–1363 (CCCTGCGTSCFKKCGGCCDDYTGHQELVIKTSHED). Residues 1359 to 1363 (TSHED) carry the KxHxx motif.

Belongs to the betacoronaviruses spike protein family. As to quaternary structure, homotrimer; each monomer consists of a S1 and a S2 subunit. The resulting peplomers protrude from the virus surface as spikes. In terms of processing, specific enzymatic cleavages in vivo yield mature proteins. The precursor is processed into S1 and S2 by host cell furin or another cellular protease to yield the mature S1 and S2 proteins. Additionally, a second cleavage leads to the release of a fusion peptide after viral attachment to host cell receptor. The cytoplasmic Cys-rich domain is palmitoylated. Spike glycoprotein is digested within host endosomes.

The protein resides in the virion membrane. It localises to the host endoplasmic reticulum-Golgi intermediate compartment membrane. The protein localises to the host cell membrane. In terms of biological role, attaches the virion to the cell membrane by interacting with host receptor, initiating the infection. Functionally, mediates fusion of the virion and cellular membranes by acting as a class I viral fusion protein. Under the current model, the protein has at least three conformational states: pre-fusion native state, pre-hairpin intermediate state, and post-fusion hairpin state. During viral and target cell membrane fusion, the coiled coil regions (heptad repeats) assume a trimer-of-hairpins structure, positioning the fusion peptide in close proximity to the C-terminal region of the ectodomain. The formation of this structure appears to drive apposition and subsequent fusion of viral and target cell membranes. Acts as a viral fusion peptide which is unmasked following S2 cleavage occurring upon virus endocytosis. The chain is Spike glycoprotein from Bovine coronavirus (strain 98TXSF-110-ENT) (BCoV-ENT).